The sequence spans 444 residues: ATP-dependent protease ATPase subunit HslU (444 aa).

Residues I18, 60–65 (GVGKTE), D256, E322, and R394 each bind ATP.

Belongs to the ClpX chaperone family. HslU subfamily. In terms of assembly, a double ring-shaped homohexamer of HslV is capped on each side by a ring-shaped HslU homohexamer. The assembly of the HslU/HslV complex is dependent on binding of ATP.

Its subcellular location is the cytoplasm. Functionally, ATPase subunit of a proteasome-like degradation complex; this subunit has chaperone activity. The binding of ATP and its subsequent hydrolysis by HslU are essential for unfolding of protein substrates subsequently hydrolyzed by HslV. HslU recognizes the N-terminal part of its protein substrates and unfolds these before they are guided to HslV for hydrolysis. This chain is ATP-dependent protease ATPase subunit HslU, found in Buchnera aphidicola subsp. Cinara cedri (strain Cc).